The chain runs to 178 residues: ATP-dependent protease subunit HslV (178 aa).

T2 is an active-site residue. Positions 159, 162, and 165 each coordinate Na(+).

This sequence belongs to the peptidase T1B family. HslV subfamily. A double ring-shaped homohexamer of HslV is capped on each side by a ring-shaped HslU homohexamer. The assembly of the HslU/HslV complex is dependent on binding of ATP.

Its subcellular location is the cytoplasm. The enzyme catalyses ATP-dependent cleavage of peptide bonds with broad specificity.. Allosterically activated by HslU binding. Its function is as follows. Protease subunit of a proteasome-like degradation complex believed to be a general protein degrading machinery. The sequence is that of ATP-dependent protease subunit HslV from Buchnera aphidicola subsp. Cinara cedri (strain Cc).